The primary structure comprises 325 residues: N-acetyl-gamma-glutamyl-phosphate reductase (325 aa).

The active site involves cysteine 131.

Belongs to the NAGSA dehydrogenase family. Type 1 subfamily.

It localises to the cytoplasm. The enzyme catalyses N-acetyl-L-glutamate 5-semialdehyde + phosphate + NADP(+) = N-acetyl-L-glutamyl 5-phosphate + NADPH + H(+). Its pathway is amino-acid biosynthesis; L-arginine biosynthesis; N(2)-acetyl-L-ornithine from L-glutamate: step 3/4. In terms of biological role, catalyzes the NADPH-dependent reduction of N-acetyl-5-glutamyl phosphate to yield N-acetyl-L-glutamate 5-semialdehyde. This is N-acetyl-gamma-glutamyl-phosphate reductase from Methylobacterium sp. (strain 4-46).